Consider the following 355-residue polypeptide: UDP-N-acetylglucosamine--N-acetylmuramyl-(pentapeptide) pyrophosphoryl-undecaprenol N-acetylglucosamine transferase (355 aa).

Residues R166, S196, and Q290 each contribute to the UDP-N-acetyl-alpha-D-glucosamine site.

It belongs to the glycosyltransferase 28 family. MurG subfamily.

It localises to the cell membrane. The enzyme catalyses Mur2Ac(oyl-L-Ala-gamma-D-Glu-L-Lys-D-Ala-D-Ala)-di-trans,octa-cis-undecaprenyl diphosphate + UDP-N-acetyl-alpha-D-glucosamine = beta-D-GlcNAc-(1-&gt;4)-Mur2Ac(oyl-L-Ala-gamma-D-Glu-L-Lys-D-Ala-D-Ala)-di-trans,octa-cis-undecaprenyl diphosphate + UDP + H(+). It participates in cell wall biogenesis; peptidoglycan biosynthesis. Cell wall formation. Catalyzes the transfer of a GlcNAc subunit on undecaprenyl-pyrophosphoryl-MurNAc-pentapeptide (lipid intermediate I) to form undecaprenyl-pyrophosphoryl-MurNAc-(pentapeptide)GlcNAc (lipid intermediate II). The chain is UDP-N-acetylglucosamine--N-acetylmuramyl-(pentapeptide) pyrophosphoryl-undecaprenol N-acetylglucosamine transferase from Staphylococcus haemolyticus (strain JCSC1435).